The primary structure comprises 169 residues: Disulfide bond formation protein B (169 aa).

The Cytoplasmic segment spans residues 1-14 (MMRFLNHCSQGRSA). A helical membrane pass occupies residues 15 to 31 (WLLMILTALILESSALY). Topologically, residues 32–49 (FQHVMKLQPCVMCIYERV) are periplasmic. C41 and C44 are joined by a disulfide. Residues 50–65 (ALFGVLSAGILGVIAP) form a helical membrane-spanning segment. At 66–71 (KTPLRW) the chain is on the cytoplasmic side. A helical transmembrane segment spans residues 72–89 (LAIILWIYSAWGGLQLAW). The Periplasmic portion of the chain corresponds to 90-144 (QHTMMQLHPSPFNTCDFFVNFPSWLALNQWLPSVFEATGDCSVRQWQFLTLEMPQ). Residues C104 and C130 are joined by a disulfide bond. The helical transmembrane segment at 145–163 (WLVGIFAAYLVVAALVLIS) threads the bilayer. Over 164–169 (QFFSRK) the chain is Cytoplasmic.

The protein belongs to the DsbB family.

It localises to the cell inner membrane. In terms of biological role, required for disulfide bond formation in some periplasmic proteins. Acts by oxidizing the DsbA protein. This chain is Disulfide bond formation protein B, found in Photorhabdus laumondii subsp. laumondii (strain DSM 15139 / CIP 105565 / TT01) (Photorhabdus luminescens subsp. laumondii).